Here is a 78-residue protein sequence, read N- to C-terminus: Large ribosomal subunit protein bL31 (78 aa).

The protein belongs to the bacterial ribosomal protein bL31 family. Type A subfamily. As to quaternary structure, part of the 50S ribosomal subunit.

Functionally, binds the 23S rRNA. The protein is Large ribosomal subunit protein bL31 (rpmE) of Rickettsia felis (strain ATCC VR-1525 / URRWXCal2) (Rickettsia azadi).